Consider the following 59-residue polypeptide: Embryonic testis differentiation protein (59 aa).

Positions 1-28 are disordered; the sequence is MDEKNPEAVPRPPEQNTELVPPKKSKSK.

As to expression, specifically expressed in testis.

The protein is Embryonic testis differentiation protein of Mus musculus (Mouse).